The sequence spans 435 residues: Hydrogenobyrinate a,c-diamide synthase (435 aa).

One can recognise a GATase cobBQ-type domain in the interval 239-422 (RIGVARDASF…IHFYLPSNPQ (184 aa)). Cys321 functions as the Nucleophile in the catalytic mechanism.

It belongs to the CobB/CbiA family. The cofactor is Mg(2+).

The enzyme catalyses hydrogenobyrinate + 2 L-glutamine + 2 ATP + 2 H2O = hydrogenobyrinate a,c-diamide + 2 L-glutamate + 2 ADP + 2 phosphate + 2 H(+). It participates in cofactor biosynthesis; adenosylcobalamin biosynthesis; cob(II)yrinate a,c-diamide from precorrin-2 (aerobic route): step 9/10. Catalyzes the ATP-dependent amidation of the two carboxylate groups at positions a and c of hydrogenobyrinate, using either L-glutamine or ammonia as the nitrogen source. This Pseudomonas aeruginosa (strain ATCC 15692 / DSM 22644 / CIP 104116 / JCM 14847 / LMG 12228 / 1C / PRS 101 / PAO1) protein is Hydrogenobyrinate a,c-diamide synthase.